The sequence spans 262 residues: Hydroxyethylthiazole kinase (262 aa).

M50 provides a ligand contact to substrate. ATP contacts are provided by R125 and T171. Residue G198 participates in substrate binding.

It belongs to the Thz kinase family. The cofactor is Mg(2+).

The catalysed reaction is 5-(2-hydroxyethyl)-4-methylthiazole + ATP = 4-methyl-5-(2-phosphooxyethyl)-thiazole + ADP + H(+). It functions in the pathway cofactor biosynthesis; thiamine diphosphate biosynthesis; 4-methyl-5-(2-phosphoethyl)-thiazole from 5-(2-hydroxyethyl)-4-methylthiazole: step 1/1. In terms of biological role, catalyzes the phosphorylation of the hydroxyl group of 4-methyl-5-beta-hydroxyethylthiazole (THZ). In Shigella boydii serotype 4 (strain Sb227), this protein is Hydroxyethylthiazole kinase.